A 240-amino-acid chain; its full sequence is Eukaryotic translation initiation factor 3 subunit K (240 aa).

Residues 41 to 221 (YDKDIVLTIL…TIKTRNIDEK (181 aa)) enclose the PCI domain.

The protein belongs to the eIF-3 subunit K family. In terms of assembly, component of the eukaryotic translation initiation factor 3 (eIF-3) complex.

The protein resides in the cytoplasm. In terms of biological role, component of the eukaryotic translation initiation factor 3 (eIF-3) complex, which is involved in protein synthesis of a specialized repertoire of mRNAs and, together with other initiation factors, stimulates binding of mRNA and methionyl-tRNAi to the 40S ribosome. The eIF-3 complex specifically targets and initiates translation of a subset of mRNAs involved in cell proliferation. The chain is Eukaryotic translation initiation factor 3 subunit K from Caenorhabditis briggsae.